We begin with the raw amino-acid sequence, 118 residues long: Large ribosomal subunit protein bL20 (118 aa).

The protein belongs to the bacterial ribosomal protein bL20 family.

Its function is as follows. Binds directly to 23S ribosomal RNA and is necessary for the in vitro assembly process of the 50S ribosomal subunit. It is not involved in the protein synthesizing functions of that subunit. This Yersinia enterocolitica serotype O:8 / biotype 1B (strain NCTC 13174 / 8081) protein is Large ribosomal subunit protein bL20.